The primary structure comprises 212 residues: MGTNKPVVIGIAGGSGSGKTSVTKAIFDHFKGHSILILEQDYYYKDQSHLPMEERLKTNYDHPLAFDNDLLIEHLQQLLAYEQIDKPVYDYTLHTRSEEIIPVEPKDVIILEGILILEDPRLCELMDIKLFVDTDADLRILRRMQRDIKERGRTMDSVIDQYVNVVRPMHNQFIEPSKKFADIIIPEGGQNHVAIDIMVTKIATILEQKVNL.

13-20 (GGSGSGKT) contributes to the ATP binding site.

The protein belongs to the uridine kinase family.

The protein localises to the cytoplasm. It catalyses the reaction uridine + ATP = UMP + ADP + H(+). The catalysed reaction is cytidine + ATP = CMP + ADP + H(+). Its pathway is pyrimidine metabolism; CTP biosynthesis via salvage pathway; CTP from cytidine: step 1/3. The protein operates within pyrimidine metabolism; UMP biosynthesis via salvage pathway; UMP from uridine: step 1/1. The protein is Uridine kinase of Bacillus cereus (strain B4264).